Consider the following 141-residue polypeptide: MAMTVHCDVVSAEESIFSGLVEIAVFPGEAGELGILPRHTPLLTRIKPGTIRLKVPDQSEFELVYVSGGMLEVQPDMITVLADTAIRAHDLDEAKALEAKKRAEEALANRNAEMDYAAAEAELAQAVAQLQAIQRLRKHTH.

This sequence belongs to the ATPase epsilon chain family. F-type ATPases have 2 components, CF(1) - the catalytic core - and CF(0) - the membrane proton channel. CF(1) has five subunits: alpha(3), beta(3), gamma(1), delta(1), epsilon(1). CF(0) has three main subunits: a, b and c.

The protein resides in the cell inner membrane. Functionally, produces ATP from ADP in the presence of a proton gradient across the membrane. In Dechloromonas aromatica (strain RCB), this protein is ATP synthase epsilon chain.